A 197-amino-acid polypeptide reads, in one-letter code: dTTP/UTP pyrophosphatase (197 aa).

The active-site Proton acceptor is the Asp-70.

Belongs to the Maf family. YhdE subfamily. Requires a divalent metal cation as cofactor.

It localises to the cytoplasm. It carries out the reaction dTTP + H2O = dTMP + diphosphate + H(+). It catalyses the reaction UTP + H2O = UMP + diphosphate + H(+). Its function is as follows. Nucleoside triphosphate pyrophosphatase that hydrolyzes dTTP and UTP. May have a dual role in cell division arrest and in preventing the incorporation of modified nucleotides into cellular nucleic acids. This is dTTP/UTP pyrophosphatase from Yersinia pestis bv. Antiqua (strain Antiqua).